A 777-amino-acid polypeptide reads, in one-letter code: Phosphoribosylformylglycinamidine synthase subunit PurL (777 aa).

Residue H50 is part of the active site. Residues Y53 and K92 each contribute to the ATP site. Position 94 (E94) interacts with Mg(2+). Substrate is bound by residues 95–98 and R117; that span reads SHNH. The active-site Proton acceptor is H96. D118 contacts Mg(2+). Q241 lines the substrate pocket. D269 is a Mg(2+) binding site. 313 to 315 contacts substrate; that stretch reads ESQ. Positions 516 and 553 each coordinate ATP. A Mg(2+)-binding site is contributed by N554. S556 serves as a coordination point for substrate.

This sequence belongs to the FGAMS family. As to quaternary structure, monomer. Part of the FGAM synthase complex composed of 1 PurL, 1 PurQ and 2 PurS subunits.

Its subcellular location is the cytoplasm. It catalyses the reaction N(2)-formyl-N(1)-(5-phospho-beta-D-ribosyl)glycinamide + L-glutamine + ATP + H2O = 2-formamido-N(1)-(5-O-phospho-beta-D-ribosyl)acetamidine + L-glutamate + ADP + phosphate + H(+). It participates in purine metabolism; IMP biosynthesis via de novo pathway; 5-amino-1-(5-phospho-D-ribosyl)imidazole from N(2)-formyl-N(1)-(5-phospho-D-ribosyl)glycinamide: step 1/2. Functionally, part of the phosphoribosylformylglycinamidine synthase complex involved in the purines biosynthetic pathway. Catalyzes the ATP-dependent conversion of formylglycinamide ribonucleotide (FGAR) and glutamine to yield formylglycinamidine ribonucleotide (FGAM) and glutamate. The FGAM synthase complex is composed of three subunits. PurQ produces an ammonia molecule by converting glutamine to glutamate. PurL transfers the ammonia molecule to FGAR to form FGAM in an ATP-dependent manner. PurS interacts with PurQ and PurL and is thought to assist in the transfer of the ammonia molecule from PurQ to PurL. The sequence is that of Phosphoribosylformylglycinamidine synthase subunit PurL from Synechococcus elongatus (strain ATCC 33912 / PCC 7942 / FACHB-805) (Anacystis nidulans R2).